Here is a 324-residue protein sequence, read N- to C-terminus: Probable RuBisCO transcriptional regulator (324 aa).

The HTH lysR-type domain occupies 8–65 (FSLEQLRILKAIATEGSFKKAAESLYMTQPAISLQIQTLEKKLNIALFDRSGRRALMT). Residues 25–44 (FKKAAESLYMTQPAISLQIQ) constitute a DNA-binding region (H-T-H motif).

Belongs to the LysR transcriptional regulatory family.

The protein localises to the plastid. The protein resides in the cyanelle. In terms of biological role, trans-acting transcriptional regulator of RuBisCO genes (rbcL and rbcS) expression. The protein is Probable RuBisCO transcriptional regulator (rbcR) of Cyanophora paradoxa.